A 564-amino-acid chain; its full sequence is Dihydroxy-acid dehydratase (564 aa).

C53 contacts [2Fe-2S] cluster. A Mg(2+)-binding site is contributed by D85. C126 contacts [2Fe-2S] cluster. Mg(2+)-binding residues include D127 and K128. K128 bears the N6-carboxylysine mark. C203 provides a ligand contact to [2Fe-2S] cluster. E454 provides a ligand contact to Mg(2+). S480 functions as the Proton acceptor in the catalytic mechanism.

Belongs to the IlvD/Edd family. Homodimer. The cofactor is [2Fe-2S] cluster. It depends on Mg(2+) as a cofactor.

It catalyses the reaction (2R)-2,3-dihydroxy-3-methylbutanoate = 3-methyl-2-oxobutanoate + H2O. The enzyme catalyses (2R,3R)-2,3-dihydroxy-3-methylpentanoate = (S)-3-methyl-2-oxopentanoate + H2O. It participates in amino-acid biosynthesis; L-isoleucine biosynthesis; L-isoleucine from 2-oxobutanoate: step 3/4. It functions in the pathway amino-acid biosynthesis; L-valine biosynthesis; L-valine from pyruvate: step 3/4. In terms of biological role, functions in the biosynthesis of branched-chain amino acids. Catalyzes the dehydration of (2R,3R)-2,3-dihydroxy-3-methylpentanoate (2,3-dihydroxy-3-methylvalerate) into 2-oxo-3-methylpentanoate (2-oxo-3-methylvalerate) and of (2R)-2,3-dihydroxy-3-methylbutanoate (2,3-dihydroxyisovalerate) into 2-oxo-3-methylbutanoate (2-oxoisovalerate), the penultimate precursor to L-isoleucine and L-valine, respectively. The polypeptide is Dihydroxy-acid dehydratase (Mycobacterium ulcerans (strain Agy99)).